We begin with the raw amino-acid sequence, 263 residues long: Oxygen-evolving enhancer protein 2-1, chloroplastic (263 aa).

Serine 153 is subject to Phosphoserine.

Belongs to the PsbP family. Interacts with WAK1.

It localises to the plastid. The protein resides in the chloroplast thylakoid lumen. In terms of biological role, may be involved in the regulation of photosystem II. This chain is Oxygen-evolving enhancer protein 2-1, chloroplastic (PSBP1), found in Arabidopsis thaliana (Mouse-ear cress).